We begin with the raw amino-acid sequence, 272 residues long: HMP-PP phosphatase (272 aa).

The Nucleophile role is filled by aspartate 8. Mg(2+) is bound by residues aspartate 8, aspartate 10, and aspartate 212.

It belongs to the HAD-like hydrolase superfamily. Cof family. Mg(2+) is required as a cofactor.

It catalyses the reaction 4-amino-2-methyl-5-(diphosphooxymethyl)pyrimidine + H2O = 4-amino-2-methyl-5-(phosphooxymethyl)pyrimidine + phosphate + H(+). Its function is as follows. Catalyzes the hydrolysis of 4-amino-2-methyl-5-hydroxymethylpyrimidine pyrophosphate (HMP-PP) to 4-amino-2-methyl-5-hydroxymethylpyrimidine phosphate (HMP-P). This is HMP-PP phosphatase from Shigella flexneri serotype 5b (strain 8401).